A 224-amino-acid chain; its full sequence is UPF0758 protein mma_2551 (224 aa).

The 123-residue stretch at 102–224 folds into the MPN domain; sequence SLNSPQAVKK…VYSFAEHGHL (123 aa). Residues H173, H175, and D186 each coordinate Zn(2+). Residues 173–186 carry the JAMM motif motif; the sequence is HNHPSGSSEPSAAD.

It belongs to the UPF0758 family.

In Janthinobacterium sp. (strain Marseille) (Minibacterium massiliensis), this protein is UPF0758 protein mma_2551.